A 361-amino-acid chain; its full sequence is Tyrosine--tRNA ligase (361 aa).

L-tyrosine-binding residues include Y36, Y162, Q166, D169, and Q184. The short motif at 236–240 is the 'KMSKS' region element; it reads KMSKS. Residue K239 coordinates ATP.

This sequence belongs to the class-I aminoacyl-tRNA synthetase family. TyrS type 4 subfamily. In terms of assembly, homodimer.

The protein localises to the cytoplasm. It carries out the reaction tRNA(Tyr) + L-tyrosine + ATP = L-tyrosyl-tRNA(Tyr) + AMP + diphosphate + H(+). Catalyzes the attachment of tyrosine to tRNA(Tyr) in a two-step reaction: tyrosine is first activated by ATP to form Tyr-AMP and then transferred to the acceptor end of tRNA(Tyr). The polypeptide is Tyrosine--tRNA ligase (Saccharolobus islandicus (strain M.14.25 / Kamchatka #1) (Sulfolobus islandicus)).